The sequence spans 90 residues: Probable Fe(2+)-trafficking protein (90 aa).

It belongs to the Fe(2+)-trafficking protein family.

Could be a mediator in iron transactions between iron acquisition and iron-requiring processes, such as synthesis and/or repair of Fe-S clusters in biosynthetic enzymes. In Thioalkalivibrio sulfidiphilus (strain HL-EbGR7), this protein is Probable Fe(2+)-trafficking protein.